A 436-amino-acid polypeptide reads, in one-letter code: Glutamyl-tRNA reductase (436 aa).

Substrate-binding positions include 49–52 (TCNR), Ser109, 114–116 (EGQ), and Gln120. The active-site Nucleophile is the Cys50. 198–203 (GAGRMS) is a binding site for NADP(+).

The protein belongs to the glutamyl-tRNA reductase family. Homodimer.

The catalysed reaction is (S)-4-amino-5-oxopentanoate + tRNA(Glu) + NADP(+) = L-glutamyl-tRNA(Glu) + NADPH + H(+). It participates in porphyrin-containing compound metabolism; protoporphyrin-IX biosynthesis; 5-aminolevulinate from L-glutamyl-tRNA(Glu): step 1/2. Its pathway is porphyrin-containing compound metabolism; chlorophyll biosynthesis. Its function is as follows. Catalyzes the NADPH-dependent reduction of glutamyl-tRNA(Glu) to glutamate 1-semialdehyde (GSA). The polypeptide is Glutamyl-tRNA reductase (Prochlorococcus marinus (strain MIT 9303)).